The sequence spans 190 residues: MKLIIGLGNPESRYNNTRHNIGFDLVDSLAAAFGSSFSSGKGKYLAAKITHRQETLMLIKPTTYMNLSGHAVVAAMNFHKVQKNDILVVCDDLNLPSGTMRLRAKGSAGGQNGLKHIIESLGSDEFARLRIGIRLGEMPPGSFSSFVLGKFSAEERVVMDRTLESCREAVLDFAKNGIEHAMNHYNKSAE.

TRNA is bound at residue Tyr-14. Catalysis depends on His-19, which acts as the Proton acceptor. 3 residues coordinate tRNA: Tyr-64, Asn-66, and Asn-112.

This sequence belongs to the PTH family. In terms of assembly, monomer.

Its subcellular location is the cytoplasm. The catalysed reaction is an N-acyl-L-alpha-aminoacyl-tRNA + H2O = an N-acyl-L-amino acid + a tRNA + H(+). Functionally, hydrolyzes ribosome-free peptidyl-tRNAs (with 1 or more amino acids incorporated), which drop off the ribosome during protein synthesis, or as a result of ribosome stalling. Its function is as follows. Catalyzes the release of premature peptidyl moieties from peptidyl-tRNA molecules trapped in stalled 50S ribosomal subunits, and thus maintains levels of free tRNAs and 50S ribosomes. This is Peptidyl-tRNA hydrolase from Chlorobium luteolum (strain DSM 273 / BCRC 81028 / 2530) (Pelodictyon luteolum).